The sequence spans 486 residues: Cardiolipin synthase A (486 aa).

The next 2 helical transmembrane spans lie at 3–23 (TFYTVVSWLVILGYWVLIAGV) and 38–58 (MAWLLIIYILPLVGIIAYLSV). PLD phosphodiesterase domains lie at 219-246 (MDLRQHRKMVMIDNYIAYTGSMNMVDPR) and 399-426 (EGGLLHTKSVLVDGELSLVGTVNLDMRS). Residues His224, Lys226, Asp231, His404, Lys406, and Asp411 contribute to the active site.

Belongs to the phospholipase D family. Cardiolipin synthase subfamily. ClsA sub-subfamily.

It localises to the cell inner membrane. It catalyses the reaction 2 a 1,2-diacyl-sn-glycero-3-phospho-(1'-sn-glycerol) = a cardiolipin + glycerol. In terms of biological role, catalyzes the reversible phosphatidyl group transfer from one phosphatidylglycerol molecule to another to form cardiolipin (CL) (diphosphatidylglycerol) and glycerol. This chain is Cardiolipin synthase A, found in Salmonella arizonae (strain ATCC BAA-731 / CDC346-86 / RSK2980).